We begin with the raw amino-acid sequence, 763 residues long: Phosphoglycerol transferase I (763 aa).

The next 4 membrane-spanning stretches (helical) occupy residues 1–21 (MSEL…AWKA), 26–46 (WWFA…ITLF), 77–97 (ILPG…LGWI), and 108–128 (FGYS…SPAF).

It belongs to the OpgB family.

It is found in the cell inner membrane. The catalysed reaction is a phosphatidylglycerol + a membrane-derived-oligosaccharide D-glucose = a 1,2-diacyl-sn-glycerol + a membrane-derived-oligosaccharide 6-(glycerophospho)-D-glucose.. It functions in the pathway glycan metabolism; osmoregulated periplasmic glucan (OPG) biosynthesis. Transfers a phosphoglycerol residue from phosphatidylglycerol to the membrane-bound nascent glucan backbones. This Escherichia coli (strain ATCC 8739 / DSM 1576 / NBRC 3972 / NCIMB 8545 / WDCM 00012 / Crooks) protein is Phosphoglycerol transferase I.